We begin with the raw amino-acid sequence, 289 residues long: Segregation and condensation protein A (289 aa).

The segment covering 1–18 (MSEDRRSPTDEAPREGEL) has biased composition (basic and acidic residues). The segment at 1 to 24 (MSEDRRSPTDEAPREGELPRSPGD) is disordered.

Belongs to the ScpA family. In terms of assembly, component of the Structural Maintenance of Chromosome (SMC) condensin-like complex composed of ScpA, ScpB and the Smc homodimer. ScpA and ScpB bind to the head domain of Smc. The presence of the three proteins is required for the association of the complex with DNA.

The protein localises to the cytoplasm. Its function is as follows. A conditionally essential component of the chromosome segregation machinery. Participates in chromosomal partition during cell division. Important for positioning of ParB-parS complexes (ori of replication) and of the ter replication site, as well as for segration of the ParB-parS complex and thus chromosome segregation. May act via the formation of a condensin-like complex containing Smc, ScpA and ScpB that pulls DNA away from mid-cell into both cell halves. The polypeptide is Segregation and condensation protein A (Myxococcus xanthus (strain DK1622)).